The sequence spans 313 residues: Formimidoylglutamase (313 aa).

Positions 130, 155, 157, 159, 241, and 243 each coordinate Mn(2+).

Belongs to the arginase family. Mn(2+) is required as a cofactor.

The enzyme catalyses N-formimidoyl-L-glutamate + H2O = formamide + L-glutamate. The protein operates within amino-acid degradation; L-histidine degradation into L-glutamate; L-glutamate from N-formimidoyl-L-glutamate (hydrolase route): step 1/1. Its function is as follows. Catalyzes the conversion of N-formimidoyl-L-glutamate to L-glutamate and formamide. This is Formimidoylglutamase from Salmonella choleraesuis (strain SC-B67).